Reading from the N-terminus, the 174-residue chain is Probable NAD(P)H dehydrogenase subunit CRR3, chloroplastic (174 aa).

The transit peptide at 1–54 directs the protein to the chloroplast; that stretch reads MAVLSTIYSITRASTPTMASLTNDSPSPLPSSSPSKLPSPTSPSKKPLKLRQVS. Polar residues predominate over residues 14 to 24; the sequence is STPTMASLTND. Positions 14–71 are disordered; the sequence is STPTMASLTNDSPSPLPSSSPSKLPSPTSPSKKPLKLRQVSKQMGSQNQQRRGNKPSI. Residues 30-45 are compositionally biased toward low complexity; the sequence is PSSSPSKLPSPTSPSK. Residues 53–64 show a composition bias toward polar residues; it reads VSKQMGSQNQQR. The chain crosses the membrane as a helical span at residues 140–160; that stretch reads FTIQWILPIWIMSLLVACGVI.

The protein resides in the plastid. It localises to the chloroplast thylakoid membrane. In terms of biological role, probable subunit of the chloroplast NAD(P)H dehydrogenase (NDH) complex of the photosynthetic electron transport chain. Required for both formation and activity of NDH. May function in assembly or stabilization of the NDH complex. This is Probable NAD(P)H dehydrogenase subunit CRR3, chloroplastic from Arabidopsis thaliana (Mouse-ear cress).